Consider the following 402-residue polypeptide: 1-deoxy-D-xylulose 5-phosphate reductoisomerase (402 aa).

NADPH contacts are provided by Thr10, Gly11, Ser12, Ile13, Asn38, and Asn124. A 1-deoxy-D-xylulose 5-phosphate-binding site is contributed by Lys125. An NADPH-binding site is contributed by Glu126. Asp150 contributes to the Mn(2+) binding site. 4 residues coordinate 1-deoxy-D-xylulose 5-phosphate: Ser151, Glu152, Ser186, and His209. A Mn(2+)-binding site is contributed by Glu152. Gly215 contributes to the NADPH binding site. 1-deoxy-D-xylulose 5-phosphate-binding residues include Ser222, Asn227, Lys228, and Glu231. Glu231 is a Mn(2+) binding site.

It belongs to the DXR family. The cofactor is Mg(2+). Mn(2+) is required as a cofactor.

It catalyses the reaction 2-C-methyl-D-erythritol 4-phosphate + NADP(+) = 1-deoxy-D-xylulose 5-phosphate + NADPH + H(+). The protein operates within isoprenoid biosynthesis; isopentenyl diphosphate biosynthesis via DXP pathway; isopentenyl diphosphate from 1-deoxy-D-xylulose 5-phosphate: step 1/6. Its function is as follows. Catalyzes the NADPH-dependent rearrangement and reduction of 1-deoxy-D-xylulose-5-phosphate (DXP) to 2-C-methyl-D-erythritol 4-phosphate (MEP). This is 1-deoxy-D-xylulose 5-phosphate reductoisomerase from Vibrio vulnificus (strain YJ016).